The following is an 855-amino-acid chain: Putative AAA family ATPase R476 (855 aa).

A compositionally biased stretch (basic and acidic residues) spans 1-13 (MNKRDFSELKNSE). A disordered region spans residues 1–37 (MNKRDFSELKNSESSEESSLVSSTETVRSSKRNKKFH). The span at 17-27 (ESSLVSSTETV) shows a compositional bias: low complexity. Position 610–617 (610–617 (GPPGTGKT)) interacts with ATP.

This sequence belongs to the AAA ATPase family.

This Acanthamoeba polyphaga mimivirus (APMV) protein is Putative AAA family ATPase R476.